Here is a 1297-residue protein sequence, read N- to C-terminus: Phosphoribosylformylglycinamidine synthase (1297 aa).

Residues 304-323 (PFPGAATGSGGEIRDEGATG) form a disordered region. Residues 307–318 (GAATGSGGEIRD) and alanine 678 each bind ATP. Residues aspartate 679, glutamate 718, asparagine 722, and aspartate 886 each contribute to the Mg(2+) site. Serine 888 provides a ligand contact to ATP. In terms of domain architecture, Glutamine amidotransferase type-1 spans 1043–1297 (RIAILREQGV…LFQNARVALG (255 aa)). Cysteine 1137 serves as the catalytic Nucleophile. Catalysis depends on residues histidine 1262 and glutamate 1264.

It in the N-terminal section; belongs to the FGAMS family. In terms of assembly, monomer.

Its subcellular location is the cytoplasm. The enzyme catalyses N(2)-formyl-N(1)-(5-phospho-beta-D-ribosyl)glycinamide + L-glutamine + ATP + H2O = 2-formamido-N(1)-(5-O-phospho-beta-D-ribosyl)acetamidine + L-glutamate + ADP + phosphate + H(+). It functions in the pathway purine metabolism; IMP biosynthesis via de novo pathway; 5-amino-1-(5-phospho-D-ribosyl)imidazole from N(2)-formyl-N(1)-(5-phospho-D-ribosyl)glycinamide: step 1/2. Its function is as follows. Phosphoribosylformylglycinamidine synthase involved in the purines biosynthetic pathway. Catalyzes the ATP-dependent conversion of formylglycinamide ribonucleotide (FGAR) and glutamine to yield formylglycinamidine ribonucleotide (FGAM) and glutamate. This chain is Phosphoribosylformylglycinamidine synthase, found in Histophilus somni (strain 129Pt) (Haemophilus somnus).